A 142-amino-acid polypeptide reads, in one-letter code: ATP synthase epsilon chain (142 aa).

This sequence belongs to the ATPase epsilon chain family. F-type ATPases have 2 components, CF(1) - the catalytic core - and CF(0) - the membrane proton channel. CF(1) has five subunits: alpha(3), beta(3), gamma(1), delta(1), epsilon(1). CF(0) has three main subunits: a, b and c.

It is found in the cell inner membrane. Functionally, produces ATP from ADP in the presence of a proton gradient across the membrane. This chain is ATP synthase epsilon chain, found in Histophilus somni (strain 2336) (Haemophilus somnus).